The sequence spans 264 residues: Flagellar brake protein YcgR 1 (264 aa).

In terms of domain architecture, PilZ spans 132–249; sequence QRREFFRLES…RLAMIERYIA (118 aa).

Belongs to the YcgR family. Monomer. Interacts with the flagellar basal bodies.

Its subcellular location is the bacterial flagellum basal body. In terms of biological role, acts as a flagellar brake, regulating swimming and swarming in a bis-(3'-5') cyclic diguanylic acid (c-di-GMP)-dependent manner. Binds 1 c-di-GMP dimer per subunit. Increasing levels of c-di-GMP lead to decreased motility. This chain is Flagellar brake protein YcgR 1, found in Dechloromonas aromatica (strain RCB).